The primary structure comprises 155 residues: Interleukin-2 (155 aa).

The signal sequence occupies residues 1–20 (MYSRQLASCVALALVLLANS). Residue T23 is glycosylated (O-linked (GalNAc...) threonine). A disulfide bridge links C78 with C126.

The protein belongs to the IL-2 family.

The protein resides in the secreted. In terms of biological role, cytokine produced by activated CD4-positive helper T-cells and to a lesser extend activated CD8-positive T-cells and natural killer (NK) cells that plays pivotal roles in the immune response and tolerance. Binds to a receptor complex composed of either the high-affinity trimeric IL-2R (IL2RA/CD25, IL2RB/CD122 and IL2RG/CD132) or the low-affinity dimeric IL-2R (IL2RB and IL2RG). Interaction with the receptor leads to oligomerization and conformation changes in the IL-2R subunits resulting in downstream signaling starting with phosphorylation of JAK1 and JAK3. In turn, JAK1 and JAK3 phosphorylate the receptor to form a docking site leading to the phosphorylation of several substrates including STAT5. This process leads to activation of several pathways including STAT, phosphoinositide-3-kinase/PI3K and mitogen-activated protein kinase/MAPK pathways. Functions as a T-cell growth factor and can increase NK-cell cytolytic activity as well. Promotes strong proliferation of activated B-cells and subsequently immunoglobulin production. Plays a pivotal role in regulating the adaptive immune system by controlling the survival and proliferation of regulatory T-cells, which are required for the maintenance of immune tolerance. Moreover, participates in the differentiation and homeostasis of effector T-cell subsets, including Th1, Th2, Th17 as well as memory CD8-positive T-cells. The polypeptide is Interleukin-2 (IL2) (Meriones unguiculatus (Mongolian jird)).